A 238-amino-acid polypeptide reads, in one-letter code: 15,16-dihydrobiliverdin:ferredoxin oxidoreductase (238 aa).

This sequence belongs to the HY2 family.

The enzyme catalyses 15,16-dihydrobiliverdin + oxidized 2[4Fe-4S]-[ferredoxin] = biliverdin IXalpha + reduced 2[4Fe-4S]-[ferredoxin] + 2 H(+). Its function is as follows. Catalyzes the two-electron reduction of biliverdin IX-alpha at the C15 methine bridge. In Prochlorococcus marinus (strain MIT 9211), this protein is 15,16-dihydrobiliverdin:ferredoxin oxidoreductase.